Reading from the N-terminus, the 410-residue chain is MDLTGLLLDEEGTFSLAGFQDFTFLPGHQKLSARIRRRLYYGWDWEADCSLEELSSPVADIAVELLQKAAPSPIRRLQKKYVAHVSREACISPCAMMLALVYIERLRHRNPDYLQHVSSSDLFLISMMVASKYLYDEGEEEEVFNDEWGAAGGVAVPTLNALERGFLSAMDWHLYTDPREIFEVLSWLESCVAEQQGRRRGWYTYTDLCVLLEQPTWQLALGSLCQRLVKLSCLLAVAYVSSVALAVASVAVIHQSLGLSCTPTPGPPDLGLTSRCLLEPCIPSVPQCLPSPANVSSCLEGSTGLRSLWGSLLASLTPPPLPPPDPPAPPTPFHNCHLCQKLQRDSPTCHACHHPNRTAPTALSSPWYHTYGLAPPWPWSPVPASIPQPQQCSLFSIMELARLKSFIFPG.

A helical membrane pass occupies residues Cys-233–Ile-253.

Belongs to the CNPPD1 family.

Its subcellular location is the membrane. The protein is Protein CNPPD1 (CNPPD1) of Pongo abelii (Sumatran orangutan).